Reading from the N-terminus, the 503-residue chain is Glycerol kinase (503 aa).

Thr14 contributes to the ADP binding site. ATP is bound by residues Thr14, Thr15, and Ser16. Residue Thr14 participates in sn-glycerol 3-phosphate binding. Arg18 contacts ADP. Sn-glycerol 3-phosphate-binding residues include Arg84, Glu85, Tyr136, and Asp246. Glycerol-binding residues include Arg84, Glu85, Tyr136, Asp246, and Gln247. ADP contacts are provided by Thr268 and Gly311. ATP-binding residues include Thr268, Gly311, Gln315, and Gly412. The ADP site is built by Gly412 and Asn416.

Belongs to the FGGY kinase family.

It carries out the reaction glycerol + ATP = sn-glycerol 3-phosphate + ADP + H(+). Its pathway is polyol metabolism; glycerol degradation via glycerol kinase pathway; sn-glycerol 3-phosphate from glycerol: step 1/1. Its activity is regulated as follows. Inhibited by fructose 1,6-bisphosphate (FBP). Its function is as follows. Key enzyme in the regulation of glycerol uptake and metabolism. Catalyzes the phosphorylation of glycerol to yield sn-glycerol 3-phosphate. This is Glycerol kinase from Haemophilus influenzae (strain PittEE).